A 554-amino-acid chain; its full sequence is Dihydroxy-acid dehydratase (554 aa).

Mg(2+) is bound at residue D78. C119 lines the [2Fe-2S] cluster pocket. Mg(2+)-binding residues include D120 and K121. Position 121 is an N6-carboxylysine (K121). [2Fe-2S] cluster is bound at residue C191. E442 contributes to the Mg(2+) binding site. S468 functions as the Proton acceptor in the catalytic mechanism.

This sequence belongs to the IlvD/Edd family. Homodimer. [2Fe-2S] cluster serves as cofactor. It depends on Mg(2+) as a cofactor.

The enzyme catalyses (2R)-2,3-dihydroxy-3-methylbutanoate = 3-methyl-2-oxobutanoate + H2O. It catalyses the reaction (2R,3R)-2,3-dihydroxy-3-methylpentanoate = (S)-3-methyl-2-oxopentanoate + H2O. It functions in the pathway amino-acid biosynthesis; L-isoleucine biosynthesis; L-isoleucine from 2-oxobutanoate: step 3/4. It participates in amino-acid biosynthesis; L-valine biosynthesis; L-valine from pyruvate: step 3/4. Functions in the biosynthesis of branched-chain amino acids. Catalyzes the dehydration of (2R,3R)-2,3-dihydroxy-3-methylpentanoate (2,3-dihydroxy-3-methylvalerate) into 2-oxo-3-methylpentanoate (2-oxo-3-methylvalerate) and of (2R)-2,3-dihydroxy-3-methylbutanoate (2,3-dihydroxyisovalerate) into 2-oxo-3-methylbutanoate (2-oxoisovalerate), the penultimate precursor to L-isoleucine and L-valine, respectively. The chain is Dihydroxy-acid dehydratase from Acetivibrio thermocellus (strain ATCC 27405 / DSM 1237 / JCM 9322 / NBRC 103400 / NCIMB 10682 / NRRL B-4536 / VPI 7372) (Clostridium thermocellum).